We begin with the raw amino-acid sequence, 54 residues long: uncharacterized protein (54 aa).

A disordered region spans residues 13-54; sequence VAGDSGGNPENISIGTTSGAVVNKGPEQIPKKKKEESKEKEE. Positions 20 to 32 are enriched in polar residues; that stretch reads NPENISIGTTSGA. A compositionally biased stretch (basic and acidic residues) spans 41–54; the sequence is IPKKKKEESKEKEE.

This is an uncharacterized protein from Enterobacteria phage T4 (Bacteriophage T4).